We begin with the raw amino-acid sequence, 168 residues long: Urease accessory protein UreE (168 aa).

The tract at residues 145–168 (EGGAYAAGQGGGHGPHGQHTHPHH) is disordered.

The protein belongs to the UreE family.

The protein resides in the cytoplasm. In terms of biological role, involved in urease metallocenter assembly. Binds nickel. Probably functions as a nickel donor during metallocenter assembly. The protein is Urease accessory protein UreE of Verminephrobacter eiseniae (strain EF01-2).